A 492-amino-acid chain; its full sequence is Ketol-acid reductoisomerase (NADP(+)) (492 aa).

In terms of domain architecture, KARI N-terminal Rossmann spans 15-208 (AQLGQCRFMD…GGDRAGVLQS (194 aa)). NADP(+) contacts are provided by residues 45 to 48 (CGAQ), Arg68, Arg76, Ser78, and 108 to 110 (DKQ). His132 is an active-site residue. Residue Gly158 coordinates NADP(+). 2 KARI C-terminal knotted domains span residues 209-353 (SFIA…DEQT) and 354-486 (YFDK…MTDM). The Mg(2+) site is built by Asp217, Glu221, Glu389, and Glu393. Ser414 serves as a coordination point for substrate.

Belongs to the ketol-acid reductoisomerase family. Mg(2+) serves as cofactor.

It catalyses the reaction (2R)-2,3-dihydroxy-3-methylbutanoate + NADP(+) = (2S)-2-acetolactate + NADPH + H(+). It carries out the reaction (2R,3R)-2,3-dihydroxy-3-methylpentanoate + NADP(+) = (S)-2-ethyl-2-hydroxy-3-oxobutanoate + NADPH + H(+). It participates in amino-acid biosynthesis; L-isoleucine biosynthesis; L-isoleucine from 2-oxobutanoate: step 2/4. The protein operates within amino-acid biosynthesis; L-valine biosynthesis; L-valine from pyruvate: step 2/4. Functionally, involved in the biosynthesis of branched-chain amino acids (BCAA). Catalyzes an alkyl-migration followed by a ketol-acid reduction of (S)-2-acetolactate (S2AL) to yield (R)-2,3-dihydroxy-isovalerate. In the isomerase reaction, S2AL is rearranged via a Mg-dependent methyl migration to produce 3-hydroxy-3-methyl-2-ketobutyrate (HMKB). In the reductase reaction, this 2-ketoacid undergoes a metal-dependent reduction by NADPH to yield (R)-2,3-dihydroxy-isovalerate. In Shewanella oneidensis (strain ATCC 700550 / JCM 31522 / CIP 106686 / LMG 19005 / NCIMB 14063 / MR-1), this protein is Ketol-acid reductoisomerase (NADP(+)).